The primary structure comprises 357 residues: sn-glycerol-3-phosphate import ATP-binding protein UgpC (357 aa).

The region spanning 4–235 is the ABC transporter domain; the sequence is LKLQAVTKSY…PASLFVASFI (232 aa). 37–44 contacts ATP; it reads GPSGCGKS.

Belongs to the ABC transporter superfamily. sn-glycerol-3-phosphate importer (TC 3.A.1.1.3) family. The complex is composed of two ATP-binding proteins (UgpC), two transmembrane proteins (UgpA and UgpE) and a solute-binding protein (UgpB).

The protein localises to the cell inner membrane. The catalysed reaction is sn-glycerol 3-phosphate(out) + ATP + H2O = sn-glycerol 3-phosphate(in) + ADP + phosphate + H(+). Its function is as follows. Part of the ABC transporter complex UgpBAEC involved in sn-glycerol-3-phosphate (G3P) import. Responsible for energy coupling to the transport system. The polypeptide is sn-glycerol-3-phosphate import ATP-binding protein UgpC (Yersinia pestis bv. Antiqua (strain Antiqua)).